We begin with the raw amino-acid sequence, 506 residues long: ATP synthase subunit alpha, chloroplastic (506 aa).

Residue 170 to 177 (GDRQTGKT) participates in ATP binding.

It belongs to the ATPase alpha/beta chains family. As to quaternary structure, F-type ATPases have 2 components, CF(1) - the catalytic core - and CF(0) - the membrane proton channel. CF(1) has five subunits: alpha(3), beta(3), gamma(1), delta(1), epsilon(1). CF(0) has four main subunits: a, b, b' and c.

The protein localises to the plastid. The protein resides in the chloroplast thylakoid membrane. It carries out the reaction ATP + H2O + 4 H(+)(in) = ADP + phosphate + 5 H(+)(out). Its function is as follows. Produces ATP from ADP in the presence of a proton gradient across the membrane. The alpha chain is a regulatory subunit. This Chlorella vulgaris (Green alga) protein is ATP synthase subunit alpha, chloroplastic.